The sequence spans 41 residues: Antimicrobial protein PN-AMP1 (41 aa).

Gln1 bears the Pyrrolidone carboxylic acid mark. Residues 1-41 enclose the Chitin-binding type-1 domain; the sequence is QQCGRQASGRLCGNRLCCSQWGYCGSTASYCGAGCQSQCRS. 4 disulfide bridges follow: Cys3/Cys18, Cys12/Cys24, Cys17/Cys31, and Cys35/Cys39.

Its function is as follows. Chitin-binding protein with a defensive function against numerous chitin containing fungal pathogens. It is also an inhibitor of Gram-positive bacteria such as B.subtilis. The chain is Antimicrobial protein PN-AMP1 from Ipomoea nil (Japanese morning glory).